The chain runs to 228 residues: MTISKWPACERPREKLLESGAAALSDAELLAVLLRVGAAGKSAVDLARELLHRFGSLTALFAAQGQALAGVRGMGAAKFAQVQAIPELARRALAESLRLPSGFDSPDSVRSYLRLTLAPLQHEVFMCLFLDPGNRMVASEELFRGTLTRTSVYPREVARQALAHNAAGIIVAHNHPRGTTAPSQSDIHLTRELARTLDLIDVRLLDHFIVAGHEIRSLAESCERLPGL.

The 123-residue stretch at 102–224 (GFDSPDSVRS…IRSLAESCER (123 aa)) folds into the MPN domain. Residues His-173, His-175, and Asp-186 each contribute to the Zn(2+) site. A JAMM motif motif is present at residues 173 to 186 (HNHPRGTTAPSQSD).

The protein belongs to the UPF0758 family.

This chain is UPF0758 protein RALTA_A2508, found in Cupriavidus taiwanensis (strain DSM 17343 / BCRC 17206 / CCUG 44338 / CIP 107171 / LMG 19424 / R1) (Ralstonia taiwanensis (strain LMG 19424)).